A 726-amino-acid chain; its full sequence is Transcription factor 12 (726 aa).

Disordered regions lie at residues 27 to 75 (SPPV…SRGF), 89 to 223 (LVSH…TFFD), 243 to 267 (YGGM…HSHD), 289 to 309 (SSFH…HTPP), 345 to 367 (PDHT…SPLA), 380 to 409 (TASG…YENS), 501 to 532 (MGSV…SSEL), 558 to 624 (VENQ…ERRM), and 694 to 726 (EEEK…MGHL). Residues 29–47 (PVNSGKNRPTTLGSSQFTA) are compositionally biased toward polar residues. A compositionally biased stretch (low complexity) spans 55–74 (SQASWASGGQSSPSFESSRG). Polar residues-rich tracts occupy residues 145-157 (PGKS…SYTG), 249-263 (GSSS…YSNL), and 291-309 (FHRS…HTPP). Residues 348–359 (TSSSFPSNPSTP) show a composition bias toward low complexity. 2 stretches are compositionally biased toward polar residues: residues 389–409 (GTTQ…YENS) and 510–532 (GSLN…SSEL). The segment covering 559–575 (ENQDKDDMHDSHASDDL) has biased composition (basic and acidic residues). The segment covering 592–603 (SSRPSCELSCSS) has biased composition (low complexity). Residues 612–624 (PEQKAERERERRM) are compositionally biased toward basic and acidic residues. A bHLH domain is found at 621–674 (ERRMANNARERLRVRDINEAFKELGRMCQLHLKSEKPQTKLLILHQAVAVILSL). The class A specific domain stretch occupies residues 676–699 (QQVRERNLNPKAACLKRREEEKVS). A compositionally biased stretch (polar residues) spans 717–726 (TDTSNPMGHL).

In terms of assembly, efficient DNA binding requires dimerization with another bHLH protein.

It is found in the nucleus. Transcriptional regulator. Involved in the initiation of neuronal differentiation. Activates transcription by binding to the E box (5'-CANNTG-3'). May be involved in the functional network that regulates the development of the GnRH axis. This is Transcription factor 12 (tcf12) from Danio rerio (Zebrafish).